The primary structure comprises 260 residues: Indole-3-glycerol phosphate synthase (260 aa).

It belongs to the TrpC family.

The enzyme catalyses 1-(2-carboxyphenylamino)-1-deoxy-D-ribulose 5-phosphate + H(+) = (1S,2R)-1-C-(indol-3-yl)glycerol 3-phosphate + CO2 + H2O. It participates in amino-acid biosynthesis; L-tryptophan biosynthesis; L-tryptophan from chorismate: step 4/5. The polypeptide is Indole-3-glycerol phosphate synthase (Staphylococcus aureus (strain MSSA476)).